The following is a 329-amino-acid chain: Microtubule-associated protein RP/EB family member 1C (329 aa).

In terms of domain architecture, Calponin-homology (CH) spans 13–115; that stretch reads FVGRSEILAW…FMQWMKKYCD (103 aa). The span at 130–141 shows a compositional bias: basic and acidic residues; that stretch reads REASKGGKEATK. The segment at 130–203 is disordered; that stretch reads REASKGGKEA…SAKQSKPVPA (74 aa). Residues 174–185 are compositionally biased toward low complexity; that stretch reads SNNTGTHHSSTG. In terms of domain architecture, EB1 C-terminal spans 193-263; sequence PSAKQSKPVP…LYAADGEDVG (71 aa). A required for nuclear localization region spans residues 289–311; the sequence is KRKLIVNLDVDVAAITTLSPRQR.

Belongs to the MAPRE family. In terms of assembly, homodimer. As to expression, highly expressed in the root and shoot meristems, in guard cells of leaf stomata, pollen grains and pollen tubes.

The protein resides in the nucleus. Its subcellular location is the cytoplasm. The protein localises to the cytoskeleton. It is found in the spindle. It localises to the phragmoplast. Plant-specific EB1 subtype that functions preferentially at early stages of plant mitosis by regulating spindle positioning and chromosome segregation. Accumulates in the prophase nucleus and is required to maintain spindle bipolarity during premetaphase and/or metaphase and for efficient segregation of chromosomes at anaphase. May play a role in the dynamics of microtubule network in elongating pollen tubes. This Arabidopsis thaliana (Mouse-ear cress) protein is Microtubule-associated protein RP/EB family member 1C (EB1C).